The chain runs to 248 residues: ATP synthase subunit a, chloroplastic (248 aa).

A run of 5 helical transmembrane segments spans residues 38-58 (QVLI…TIAV), 96-116 (VPFI…GALL), 135-155 (INTT…AGLA), 200-220 (LVVA…VMFL), and 221-241 (GLFT…AYIG).

The protein belongs to the ATPase A chain family. In terms of assembly, F-type ATPases have 2 components, CF(1) - the catalytic core - and CF(0) - the membrane proton channel. CF(1) has five subunits: alpha(3), beta(3), gamma(1), delta(1), epsilon(1). CF(0) has four main subunits: a, b, b' and c.

The protein localises to the plastid. The protein resides in the chloroplast thylakoid membrane. Functionally, key component of the proton channel; it plays a direct role in the translocation of protons across the membrane. The protein is ATP synthase subunit a, chloroplastic of Cycas taitungensis (Prince sago).